A 150-amino-acid polypeptide reads, in one-letter code: Glycine cleavage system H-like protein gcvH2 (150 aa).

A Lipoyl-binding domain is found at 44–126; sequence VATVGLSSFG…PANNWMVKFK (83 aa).

Belongs to the GcvH family.

The polypeptide is Glycine cleavage system H-like protein gcvH2 (gcvH2) (Dictyostelium discoideum (Social amoeba)).